A 284-amino-acid polypeptide reads, in one-letter code: Polyamine aminopropyltransferase (284 aa).

Residues 2–237 (ELWYTEQHTE…GHWLFGFASK (236 aa)) form the PABS domain. S-methyl-5'-thioadenosine is bound at residue Gln-31. Spermidine-binding residues include His-62 and Asp-86. Residues Glu-106 and 137–138 (DG) contribute to the S-methyl-5'-thioadenosine site. Asp-155 (proton acceptor) is an active-site residue. Residue 155 to 158 (DSTD) coordinates spermidine. Residue Pro-162 coordinates S-methyl-5'-thioadenosine.

The protein belongs to the spermidine/spermine synthase family. In terms of assembly, homodimer or homotetramer.

The protein localises to the cytoplasm. It carries out the reaction S-adenosyl 3-(methylsulfanyl)propylamine + putrescine = S-methyl-5'-thioadenosine + spermidine + H(+). The protein operates within amine and polyamine biosynthesis; spermidine biosynthesis; spermidine from putrescine: step 1/1. In terms of biological role, catalyzes the irreversible transfer of a propylamine group from the amino donor S-adenosylmethioninamine (decarboxy-AdoMet) to putrescine (1,4-diaminobutane) to yield spermidine. This Alkaliphilus oremlandii (strain OhILAs) (Clostridium oremlandii (strain OhILAs)) protein is Polyamine aminopropyltransferase.